A 21-amino-acid chain; its full sequence is DNWWPKPPHQGPRPPRPRPKP.

The segment covering 1-14 has biased composition (pro residues); it reads DNWWPKPPHQGPRP. Positions 1–21 are disordered; it reads DNWWPKPPHQGPRPPRPRPKP. Implicated in receptor binding regions lie at residues 3–6, 8–11, and 13–14; these read WWPK, PHQG, and RP.

Monomer. Expressed by the venom gland.

The protein localises to the secreted. Functionally, in vitro, reversibly blocks human muscle-type nicotinic acetylcholine receptors (nAChR) alpha-1-beta-1-epsilon-delta/CHRNA1-CHRNB1-CHRNE-CHRND (EC(50)=0.44 uM) and alpha-1-beta-1-gamma-delta/CHRNA1-CHRNB1-CHRNG-CHRND (EC(50)=1.56 uM). Binds to nAChR from T.californica (IC(50)=0.03-0.18 uM), human neuronal nAChR alpha-7/CHRNA7 (IC(50)=22 uM) and acetylcholine-binding proteins (AChBP) from L.stagnalis (IC(50)=63 uM) and A.californica (IC(50)=230 uM). In Azemiops feae (Fea's viper), this protein is Azemiopsin.